The chain runs to 364 residues: Mannitol-1-phosphate 5-dehydrogenase (364 aa).

Residue 6 to 17 (VLHFGAGNIGRG) coordinates NAD(+).

Belongs to the mannitol dehydrogenase family.

It catalyses the reaction D-mannitol 1-phosphate + NAD(+) = beta-D-fructose 6-phosphate + NADH + H(+). In Mycoplasma pneumoniae (strain ATCC 29342 / M129 / Subtype 1) (Mycoplasmoides pneumoniae), this protein is Mannitol-1-phosphate 5-dehydrogenase (mtlD).